A 35-amino-acid chain; its full sequence is Somatostatin (35 aa).

A disulfide bridge connects residues Cys24 and Cys35.

It belongs to the somatostatin family.

It localises to the secreted. Its function is as follows. Somatostatin inhibits the release of somatotropin. This Lampetra fluviatilis (European river lamprey) protein is Somatostatin (sst).